A 450-amino-acid polypeptide reads, in one-letter code: Cytochrome c1 (450 aa).

An N-terminal signal peptide occupies residues 1 to 21 (MTLRNASLTAVAALTVALAGG). Positions 24-58 (AQDASTAPGTTAPAGSSYHTNEAAPAAADTAPAAE) are enriched in low complexity. Residues 24–210 (AQDASTAPGT…AAAQEAGDSH (187 aa)) form a disordered region. Composition is skewed to acidic residues over residues 59 to 77 (AADE…EVTE), 85 to 108 (PAEE…EPAA), and 118 to 194 (APAE…EDEA). 3 residues coordinate heme c: cysteine 245, cysteine 248, and histidine 249. Positions 284–305 (PETEEDRPRVPTDHFPTVSGEG) are disordered. Methionine 373 contributes to the heme c binding site. Residues 421–435 (SVIFLIVLAALLYLT) traverse the membrane as a helical segment.

In terms of assembly, the main subunits of complex b-c1 are: cytochrome b, cytochrome c1 and the Rieske protein. Binds 1 heme c group covalently per subunit.

It localises to the cell membrane. Its function is as follows. Component of the ubiquinol-cytochrome c reductase complex (complex III or cytochrome b-c1 complex), which is a respiratory chain that generates an electrochemical potential coupled to ATP synthesis. c1 functions as an electron donor to cytochrome c. The sequence is that of Cytochrome c1 (petC) from Paracoccus denitrificans.